Consider the following 617-residue polypeptide: Dihydroxy-acid dehydratase (617 aa).

Residue aspartate 82 participates in Mg(2+) binding. Position 123 (cysteine 123) interacts with [2Fe-2S] cluster. Mg(2+) contacts are provided by aspartate 124 and lysine 125. Residue lysine 125 is modified to N6-carboxylysine. A [2Fe-2S] cluster-binding site is contributed by cysteine 197. Position 497 (glutamate 497) interacts with Mg(2+). The active-site Proton acceptor is the serine 523.

This sequence belongs to the IlvD/Edd family. Homodimer. [2Fe-2S] cluster is required as a cofactor. Mg(2+) serves as cofactor.

The catalysed reaction is (2R)-2,3-dihydroxy-3-methylbutanoate = 3-methyl-2-oxobutanoate + H2O. It catalyses the reaction (2R,3R)-2,3-dihydroxy-3-methylpentanoate = (S)-3-methyl-2-oxopentanoate + H2O. The protein operates within amino-acid biosynthesis; L-isoleucine biosynthesis; L-isoleucine from 2-oxobutanoate: step 3/4. Its pathway is amino-acid biosynthesis; L-valine biosynthesis; L-valine from pyruvate: step 3/4. Functionally, functions in the biosynthesis of branched-chain amino acids. Catalyzes the dehydration of (2R,3R)-2,3-dihydroxy-3-methylpentanoate (2,3-dihydroxy-3-methylvalerate) into 2-oxo-3-methylpentanoate (2-oxo-3-methylvalerate) and of (2R)-2,3-dihydroxy-3-methylbutanoate (2,3-dihydroxyisovalerate) into 2-oxo-3-methylbutanoate (2-oxoisovalerate), the penultimate precursor to L-isoleucine and L-valine, respectively. The sequence is that of Dihydroxy-acid dehydratase from Streptomyces coelicolor (strain ATCC BAA-471 / A3(2) / M145).